We begin with the raw amino-acid sequence, 562 residues long: Phosphoglucomutase-1 (562 aa).

N-acetylmethionine is present on M1. An N6-acetyllysine modification is found at K16. Alpha-D-glucose 1,6-bisphosphate is bound at residue R23. T115 is subject to Phosphothreonine. Alpha-D-glucose 1,6-bisphosphate is bound at residue S117. S117 serves as the catalytic Phosphoserine intermediate. S117 is a Mg(2+) binding site. S117 and S134 each carry phosphoserine. Phosphothreonine is present on T185. Phosphoserine occurs at positions 206 and 213. The Mg(2+) site is built by D288, D290, and D292. Positions 292 and 293 each coordinate alpha-D-glucose 1,6-bisphosphate. K349 is modified (N6-acetyllysine). Phosphotyrosine is present on Y353. Residue T357 coordinates alpha-D-glucose 1,6-bisphosphate. Residue S369 is modified to Phosphoserine. 3 residues coordinate alpha-D-glucose 1,6-bisphosphate: E376, S378, and K389. S378 carries the post-translational modification Phosphoserine. Residue K419 is modified to N6-succinyllysine. Phosphothreonine; by PAK1 is present on T467. A phosphoserine mark is found at S477, S485, and S505. Position 507 is a phosphothreonine (T507). S509 and S541 each carry phosphoserine.

It belongs to the phosphohexose mutase family. As to quaternary structure, monomer. It depends on Mg(2+) as a cofactor. Post-translationally, phosphorylation at Thr-467 by PAK1 significantly enhances enzymatic activity.

The protein localises to the cytoplasm. It carries out the reaction alpha-D-glucose 1-phosphate = alpha-D-glucose 6-phosphate. The enzyme catalyses O-phospho-L-seryl-[protein] + alpha-D-glucose 1-phosphate = alpha-D-glucose 1,6-bisphosphate + L-seryl-[protein]. The catalysed reaction is alpha-D-glucose 1,6-bisphosphate + L-seryl-[protein] = O-phospho-L-seryl-[protein] + alpha-D-glucose 6-phosphate. In terms of biological role, catalyzes the reversible isomerization of alpha-D-glucose 1-phosphate to alpha-D-glucose 6-phosphate. The mechanism proceeds via the intermediate compound alpha-D-glucose 1,6-bisphosphate. This enzyme participates in both the breakdown and synthesis of glucose. This Macaca fascicularis (Crab-eating macaque) protein is Phosphoglucomutase-1 (PGM1).